The following is a 560-amino-acid chain: E3 SUMO-protein ligase CBX4 (560 aa).

The tract at residues 1 to 75 (MELPAVGEHV…LMGYRKRGPK (75 aa)) is involved in interaction with H3C15 and H3C1. Positions 1-539 (MELPAVGEHV…LSEFKPFFGN (539 aa)) are interaction with BMI1. The Chromo domain occupies 11-69 (FAVESIEKKRIRKGRVEYLVKWRGWSPKYNTWEPEENILDPRLLIAFQNRERQEQLMGY). Glycyl lysine isopeptide (Lys-Gly) (interchain with G-Cter in SUMO2) cross-links involve residues lysine 77, lysine 106, lysine 114, and lysine 125. Positions 92–152 (VLTGLQDSST…PPGKSGKYYY (61 aa)) are disordered. An N6-acetyllysine; alternate modification is found at lysine 149. Residue lysine 149 forms a Glycyl lysine isopeptide (Lys-Gly) (interchain with G-Cter in SUMO2); alternate linkage. Residues lysine 157, lysine 167, and lysine 178 each participate in a glycyl lysine isopeptide (Lys-Gly) (interchain with G-Cter in SUMO2) cross-link. Serine 182 is modified (phosphoserine). Residues lysine 191, lysine 205, lysine 212, lysine 223, lysine 249, lysine 268, lysine 278, and lysine 280 each participate in a glycyl lysine isopeptide (Lys-Gly) (interchain with G-Cter in SUMO2) cross-link. The interval 217 to 243 (AAGAPGKGSEKGPPNGMMPAPKEAVTG) is disordered. Composition is skewed to basic and acidic residues over residues 281–291 (SGEVAEGEARS) and 298–331 (AADERHPPADRTFKKAAGAEEKKVEAPPKRREEE). Residues 281–404 (SGEVAEGEAR…HHHHHHAVGL (124 aa)) form a disordered region. Glycyl lysine isopeptide (Lys-Gly) (interchain with G-Cter in SUMO2) cross-links involve residues lysine 320, lysine 352, and lysine 365. Over residues 380–401 (PSHHPHPHPHHHHHHHHHHHHA) the composition is skewed to basic residues. Phosphoserine is present on serine 467. A Glycyl lysine isopeptide (Lys-Gly) (interchain with G-Cter in SUMO2); alternate cross-link involves residue lysine 494. Residue lysine 494 forms a Glycyl lysine isopeptide (Lys-Gly) (interchain with G-Cter in SUMO); alternate linkage. Threonine 497 is subject to Phosphothreonine; by HIPK2. A compositionally biased stretch (low complexity) spans 509 to 521 (AAPTTTAEKPPAE). Residues 509-528 (AAPTTTAEKPPAEAQDEPAE) form a disordered region. The tract at residues 531 to 556 (SEFKPFFGNIIITDVTANCLTVTFKE) is involved in interaction with H3C15 and RNF2. The interval 540–560 (IIITDVTANCLTVTFKEYVTV) is interaction with RNF2.

As to quaternary structure, interacts with histone H3-K9Me3. Interacts with CHTOP. Component of a PRC1-like complex. The composition of the PRC1 complex differs between the PRC1 complex in pluripotent embryonic stem cells containing RNF2, CBX7 and PCGF2, and the PRC1 complex in differentiating cells containing RNF2, CBX2, CBX4 and BMI1. Self-associates. Interacts with SUV39H1 and HIPK2. Interacts with CSNK2B. May interact with H3C15, H3C1 and RNF2. Interacts with SUMO1P1/SUMO5. Interacts with PRDM1/Blimp-1. Ubiquitinated. Ubiquitination regulates the function of the Polycomb group (PcG) multiprotein PRC1-like complex. Deubiquitinated by USP26. Post-translationally, phosphorylated on Thr-497 by HIPK2 upon DNA damage. This phosphorylation stimulates E3 SUMO-protein ligase activity and promotes sumoylation on Lys-494, as well as sumoylation of other target proteins, such as HNRNPK. In terms of tissue distribution, ubiquitous.

The protein localises to the nucleus. It localises to the nucleus speckle. Its pathway is protein modification; protein sumoylation. In terms of biological role, E3 SUMO-protein ligase that catalyzes sumoylation of target proteins by promoting the transfer of SUMO from the E2 enzyme to the substrate. Involved in the sumoylation of HNRNPK, a p53/TP53 transcriptional coactivator, hence indirectly regulates p53/TP53 transcriptional activation resulting in p21/CDKN1A expression. Monosumoylates ZNF131. Functionally, component of a Polycomb group (PcG) multiprotein PRC1-like complex, a complex class required to maintain the transcriptionally repressive state of many genes, including Hox genes, throughout development. PcG PRC1 complex acts via chromatin remodeling and modification of histones; it mediates monoubiquitination of histone H2A 'Lys-119', rendering chromatin heritably changed in its expressibility. Binds to histone H3 trimethylated at 'Lys-9' (H3K9me3). Plays a role in the lineage differentiation of the germ layers in embryonic development. The protein is E3 SUMO-protein ligase CBX4 (CBX4) of Homo sapiens (Human).